The sequence spans 815 residues: (-)-kolavenyl diphosphate synthase TPS28, chloroplastic (815 aa).

A chloroplast-targeting transit peptide spans methionine 1–isoleucine 51. Substrate is bound at residue lysine 247. Positions 379 and 381 each coordinate Mg(2+). The DXDD motif motif lies at aspartate 379–aspartate 382. Lysine 465 is a binding site for substrate.

Belongs to the terpene synthase family. Tpsc subfamily. It depends on Mg(2+) as a cofactor.

It localises to the plastid. The protein localises to the chloroplast. It carries out the reaction (2E,6E,10E)-geranylgeranyl diphosphate = (-)-kolavenyl diphosphate. Its activity is regulated as follows. Inhibited by high concentrations of magnesium. Functionally, diterpene synthase that catalyzes the formation of (-)-kolavenyl diphosphate from geranylgeranyl diphosphate (GGPP). The protein is (-)-kolavenyl diphosphate synthase TPS28, chloroplastic of Tripterygium wilfordii (Thunder God vine).